The primary structure comprises 493 residues: Inosine-5'-monophosphate dehydrogenase (493 aa).

2 CBS domains span residues 97–155 (VIID…NAPI) and 159–219 (MTSE…AKDE). NAD(+) contacts are provided by residues Asp-253 and 303–305 (GIG). K(+) contacts are provided by Gly-305 and Gly-307. IMP is bound at residue Ser-308. Cys-310 is a binding site for K(+). Cys-310 functions as the Thioimidate intermediate in the catalytic mechanism. IMP is bound by residues 343–345 (DGG), 366–367 (GS), and 390–394 (YRGMG). The active-site Proton acceptor is Arg-406. Glu-421 lines the IMP pocket. Positions 475, 476, and 477 each coordinate K(+).

The protein belongs to the IMPDH/GMPR family. In terms of assembly, homotetramer. Requires K(+) as cofactor.

It catalyses the reaction IMP + NAD(+) + H2O = XMP + NADH + H(+). Its pathway is purine metabolism; XMP biosynthesis via de novo pathway; XMP from IMP: step 1/1. Mycophenolic acid (MPA) is a non-competitive inhibitor that prevents formation of the closed enzyme conformation by binding to the same site as the amobile flap. In contrast, mizoribine monophosphate (MZP) is a competitive inhibitor that induces the closed conformation. MPA is a potent inhibitor of mammalian IMPDHs but a poor inhibitor of the bacterial enzymes. MZP is a more potent inhibitor of bacterial IMPDH. In terms of biological role, catalyzes the conversion of inosine 5'-phosphate (IMP) to xanthosine 5'-phosphate (XMP), the first committed and rate-limiting step in the de novo synthesis of guanine nucleotides, and therefore plays an important role in the regulation of cell growth. This is Inosine-5'-monophosphate dehydrogenase from Streptococcus pyogenes serotype M3 (strain ATCC BAA-595 / MGAS315).